Consider the following 188-residue polypeptide: MSIKSDKWIRRMAEREGMIEPFEEDQVRYVNERRVISYGTSSYGYDVRCADEFKVFTNIHSAVVDPKGFDEKSFVDVKGDVCVIPPNSFALARTVEYFRIPRSVLTICLGKSTYARCGIIVNVTPLEPEWEGHVTLEFSNTTNLPARIYANEGVAQMLFLESDEVCDVSYKDRGGKYMGQRGVTLPRT.

DCTP-binding positions include 111 to 116, 135 to 137, Q156, Y170, and Q180; these read KSTYAR and TLE. E137 functions as the Proton donor/acceptor in the catalytic mechanism.

It belongs to the dCTP deaminase family. As to quaternary structure, homotrimer.

It catalyses the reaction dCTP + H2O + H(+) = dUTP + NH4(+). Its pathway is pyrimidine metabolism; dUMP biosynthesis; dUMP from dCTP (dUTP route): step 1/2. Functionally, catalyzes the deamination of dCTP to dUTP. The chain is dCTP deaminase from Chromohalobacter salexigens (strain ATCC BAA-138 / DSM 3043 / CIP 106854 / NCIMB 13768 / 1H11).